A 406-amino-acid chain; its full sequence is D-alanyl-D-alanine carboxypeptidase (406 aa).

An N-terminal signal peptide occupies residues 1 to 31; sequence MVSGTVGRGTALGAVLLALLAVPAQAGTAAA. Serine 93 functions as the Acyl-ester intermediate in the catalytic mechanism. Substrate is bound by residues 151–154, 190–192, arginine 316, 330–332, and 357–358; these read FAQT, YSN, TGT, and SN. The propeptide occupies 381-406; the sequence is AKLRSATSSATTVERHEDIAPGIARD. A disordered region spans residues 387 to 406; sequence TSSATTVERHEDIAPGIARD. Positions 393–406 are enriched in basic and acidic residues; sequence VERHEDIAPGIARD.

This sequence belongs to the peptidase S12 family.

The protein localises to the secreted. It catalyses the reaction Preferential cleavage: (Ac)2-L-Lys-D-Ala-|-D-Ala. Also transpeptidation of peptidyl-alanyl moieties that are N-acyl substituents of D-alanine.. Its pathway is cell wall biogenesis; peptidoglycan biosynthesis. In terms of biological role, catalyzes distinct carboxypeptidation and transpeptidation reactions during the last stages of wall peptidoglycan synthesis. Mistaking a beta-lactam antibiotic molecule for a normal substrate (i.e. a D-alanyl-D-alanine-terminated peptide), it becomes immobilized in the form of a long-lived, serine-ester-linked acyl enzyme and thus behave as penicillin-binding protein (PBP). The sequence is that of D-alanyl-D-alanine carboxypeptidase from Streptomyces sp. (strain R61).